The sequence spans 442 residues: ATP-dependent protease ATPase subunit HslU (442 aa).

ATP-binding positions include Ile-18 and 60 to 65 (GVGKTE). Residues 136 to 156 (LPKPKNDWDSTDSDANSNTRQ) form a disordered region. Residues Asp-255, Glu-320, and Arg-392 each coordinate ATP.

The protein belongs to the ClpX chaperone family. HslU subfamily. A double ring-shaped homohexamer of HslV is capped on each side by a ring-shaped HslU homohexamer. The assembly of the HslU/HslV complex is dependent on binding of ATP.

The protein localises to the cytoplasm. In terms of biological role, ATPase subunit of a proteasome-like degradation complex; this subunit has chaperone activity. The binding of ATP and its subsequent hydrolysis by HslU are essential for unfolding of protein substrates subsequently hydrolyzed by HslV. HslU recognizes the N-terminal part of its protein substrates and unfolds these before they are guided to HslV for hydrolysis. The protein is ATP-dependent protease ATPase subunit HslU of Shewanella sp. (strain MR-7).